A 137-amino-acid chain; its full sequence is Profilin-3 (137 aa).

The protein belongs to the profilin family. Interacts with ACTRT3. As to expression, detected in round spermatids.

The protein resides in the cytoplasm. It localises to the cytoskeleton. It is found in the nucleus. Its function is as follows. Binds to actin and affects the structure of the cytoskeleton. Slightly reduces actin polymerization. Binds to poly-L-proline, phosphatidylinositol 3-phosphate (PtdIns(3)P), phosphatidylinositol 4,5-bisphosphate (PtdIns(4,5)P2), and phosphatidylinositol 4-phosphate (PtdIns(4)P). May be involved in spermatogenesis. This is Profilin-3 (Pfn3) from Rattus norvegicus (Rat).